Consider the following 119-residue polypeptide: uncharacterized protein (119 aa).

Residues Met-1 to Asp-23 form the signal peptide. The next 3 helical transmembrane spans lie at Ile-27 to Ile-47, Leu-50 to Ile-70, and Ile-88 to Ile-108.

The protein localises to the cell membrane. This is an uncharacterized protein from Bacillus subtilis (strain 168).